We begin with the raw amino-acid sequence, 764 residues long: MVTTHNLGFPRIGAKRELKFGLERYWKGESSRGALKALGAELRQRHWNDQRDLDLAPVGDFAFYDQVLDMSFTLGNLPKRVQGFHGDALDNYFRVARGRSAQSAEEHAACCGGVSAGEMTKWFDTNYHYIVPEFHADTNFSLDPSRLLQQLAEAQAQGVAAKPVIVGPVTYLWLGKAKDDSDRLALLPKLLPVYGALLDTLTAQGVEWVQIDEPILVTELDAAWQQAFRTAYAALETRRIKVLLATYFGQLQGNLALATSLPVDGLHVDAINARDEVDALARELPAERVLSVGAINGRNIWKTDLNATLDWLEPLAKRLGDRLWLAPSCSLLHVPVDLASEEKLDAEIRSWLAFALQKLDELKVLATALNEGRDKVADALAANAAAIHSRRHSPRVNNPAVKAAIARIDAQLGNRVSPYTQRAPKQSARLNLPAFPTTTIGSFPQTGEIRQARSQFKAGTLDEAGYRKAMQAEIERSVREQESLELDVLVHGEAERNDMVEYFGEQLDGYAFSQFGWVQSYGSRCVKPPILFGDISRPKAMTVEWITYAQSLTNKPMKGMLTGPVTILNWSFVRDDQPRSVSCYQLALAIREEVLDLEKAGVRVIQIDEAALREGLPLRRAQWGEYLKWAVESFRITANGVQDDTQIHTHMCYSEFNDIIASIADMDADVITIETSRSDMELLDAFDNFKYPNEIGPGVYDIHSPNIPTQEHIVGLMKKAAERIPAERLWVNPDCGLKTRQWAEVIPALTNMVAAAKTLRNQVQ.

5-methyltetrahydropteroyltri-L-glutamate contacts are provided by residues 16–19 (RELK) and Lys-121. Residues 440–442 (IGS) and Glu-493 each bind L-homocysteine. L-methionine contacts are provided by residues 440–442 (IGS) and Glu-493. Residues 524 to 525 (RC) and Trp-570 contribute to the 5-methyltetrahydropteroyltri-L-glutamate site. Asp-608 is a binding site for L-homocysteine. Asp-608 contacts L-methionine. Glu-614 serves as a coordination point for 5-methyltetrahydropteroyltri-L-glutamate. Zn(2+)-binding residues include His-650, Cys-652, and Glu-674. His-703 serves as the catalytic Proton donor. Cys-735 contacts Zn(2+).

It belongs to the vitamin-B12 independent methionine synthase family. Zn(2+) serves as cofactor.

The catalysed reaction is 5-methyltetrahydropteroyltri-L-glutamate + L-homocysteine = tetrahydropteroyltri-L-glutamate + L-methionine. The protein operates within amino-acid biosynthesis; L-methionine biosynthesis via de novo pathway; L-methionine from L-homocysteine (MetE route): step 1/1. Functionally, catalyzes the transfer of a methyl group from 5-methyltetrahydrofolate to homocysteine resulting in methionine formation. The protein is 5-methyltetrahydropteroyltriglutamate--homocysteine methyltransferase of Burkholderia lata (strain ATCC 17760 / DSM 23089 / LMG 22485 / NCIMB 9086 / R18194 / 383).